A 176-amino-acid polypeptide reads, in one-letter code: Late embryogenesis abundant protein 49 (176 aa).

2 consecutive SMP domains span residues 49 to 106 and 115 to 171; these read TTLT…RNQK and NLGD…KLNH.

This sequence belongs to the LEA type SMP family.

Its subcellular location is the cytoplasm. It is found in the nucleus. In terms of biological role, LEA proteins are late embryonic proteins abundant in higher plant seed embryos. The function of those proteins is not known. The protein is Late embryogenesis abundant protein 49 of Arabidopsis thaliana (Mouse-ear cress).